Reading from the N-terminus, the 79-residue chain is Putative membrane protein insertion efficiency factor (79 aa).

It belongs to the UPF0161 family.

The protein resides in the cell inner membrane. Its function is as follows. Could be involved in insertion of integral membrane proteins into the membrane. The protein is Putative membrane protein insertion efficiency factor of Synechocystis sp. (strain ATCC 27184 / PCC 6803 / Kazusa).